The following is a 168-amino-acid chain: N-alpha-acetyltransferase (168 aa).

One can recognise an N-acetyltransferase domain in the interval 13–168; sequence YQIRLATLSD…EDAYLMAAPL (156 aa). Tyr-38 provides a ligand contact to substrate. His-89 lines the Zn(2+) pocket. Acetyl-CoA contacts are provided by residues 93 to 95 and 101 to 106; these read IAV and KIGVGT. CoA-binding positions include 93-95 and 101-106; these read IAV and KIGVGT. Glu-128 provides a ligand contact to Zn(2+). Acetyl-CoA contacts are provided by residues Asn-133 and 140-142; that span reads YKK. Asn-133 is a binding site for CoA. Tyr-155 contributes to the substrate binding site.

It belongs to the acetyltransferase family. ARD1 subfamily. Homodimer.

The protein resides in the cytoplasm. The enzyme catalyses N-terminal L-alanyl-[protein] + acetyl-CoA = N-terminal N(alpha)-acetyl-L-alanyl-[protein] + CoA + H(+). It carries out the reaction N-terminal L-seryl-[protein] + acetyl-CoA = N-terminal N(alpha)-acetyl-L-seryl-[protein] + CoA + H(+). The catalysed reaction is N-terminal L-methionyl-L-leucyl-[protein] + acetyl-CoA = N-terminal N(alpha)-acetyl-L-methionyl-L-leucyl-[protein] + CoA + H(+). It catalyses the reaction N-terminal L-methionyl-L-glutamyl-[protein] + acetyl-CoA = N-terminal N(alpha)-acetyl-L-methionyl-L-glutamyl-[protein] + CoA + H(+). In terms of biological role, displays alpha (N-terminal) acetyltransferase activity. Catalyzes the covalent attachment of an acetyl moiety from acetyl-CoA to the free alpha-amino group at the N-terminus of a protein. This chain is N-alpha-acetyltransferase, found in Sulfolobus acidocaldarius (strain ATCC 33909 / DSM 639 / JCM 8929 / NBRC 15157 / NCIMB 11770).